A 341-amino-acid polypeptide reads, in one-letter code: UDP-3-O-(3-hydroxymyristoyl)glucosamine N-acyltransferase (341 aa).

Catalysis depends on His-239, which acts as the Proton acceptor.

It belongs to the transferase hexapeptide repeat family. LpxD subfamily. In terms of assembly, homotrimer.

The enzyme catalyses a UDP-3-O-[(3R)-3-hydroxyacyl]-alpha-D-glucosamine + a (3R)-hydroxyacyl-[ACP] = a UDP-2-N,3-O-bis[(3R)-3-hydroxyacyl]-alpha-D-glucosamine + holo-[ACP] + H(+). The catalysed reaction is UDP-3-O-[(3R)-3-hydroxytetradecanoyl]-alpha-D-glucosamine + (3R)-hydroxytetradecanoyl-[ACP] = UDP-2-N,3-O-bis[(3R)-3-hydroxytetradecanoyl]-alpha-D-glucosamine + holo-[ACP] + H(+). Its pathway is glycolipid biosynthesis; lipid IV(A) biosynthesis; lipid IV(A) from (3R)-3-hydroxytetradecanoyl-[acyl-carrier-protein] and UDP-N-acetyl-alpha-D-glucosamine: step 3/6. Functionally, catalyzes the N-acylation of UDP-3-O-(hydroxytetradecanoyl)glucosamine using 3-hydroxytetradecanoyl-ACP as the acyl donor. Is involved in the biosynthesis of lipid A, a phosphorylated glycolipid that anchors the lipopolysaccharide to the outer membrane of the cell. This Escherichia coli O157:H7 protein is UDP-3-O-(3-hydroxymyristoyl)glucosamine N-acyltransferase.